The primary structure comprises 119 residues: Putative membrane protein insertion efficiency factor (119 aa).

Belongs to the UPF0161 family.

The protein resides in the cell inner membrane. Could be involved in insertion of integral membrane proteins into the membrane. The chain is Putative membrane protein insertion efficiency factor from Brucella anthropi (strain ATCC 49188 / DSM 6882 / CCUG 24695 / JCM 21032 / LMG 3331 / NBRC 15819 / NCTC 12168 / Alc 37) (Ochrobactrum anthropi).